Consider the following 107-residue polypeptide: Replication initiation control protein YabA (107 aa).

The Zn(2+) site is built by histidine 80, cysteine 82, cysteine 97, and cysteine 100.

This sequence belongs to the YabA family. As to quaternary structure, homotetramer. Interacts with both DnaA and DnaN, acting as a bridge between these two proteins. Requires Zn(2+) as cofactor.

The protein resides in the cytoplasm. It localises to the nucleoid. Its function is as follows. Involved in control of chromosome replication initiation. Inhibits the cooperative binding of DnaA to the oriC region, thus negatively regulating initiation of chromosome replication. Inhibits the ability of DnaA-ATP to form a helix on DNA; does not disassemble preformed DnaA-DNA helices. Decreases the residence time of DnaA on the chromosome at its binding sites (oriC, replication forks and promoter-binding sites). Tethers DnaA to the replication machinery via the DNA polymerase beta sliding clamp subunit (dnaN). Associates with oriC and other DnaA targets on the chromosome in a DnaA-dependent manner. This Streptococcus gordonii (strain Challis / ATCC 35105 / BCRC 15272 / CH1 / DL1 / V288) protein is Replication initiation control protein YabA.